A 429-amino-acid chain; its full sequence is Ribosomal RNA small subunit methyltransferase B (429 aa).

S-adenosyl-L-methionine contacts are provided by residues 254–260 (CAAPGGK), Asp-277, Asp-303, and Asp-322. Catalysis depends on Cys-375, which acts as the Nucleophile.

Belongs to the class I-like SAM-binding methyltransferase superfamily. RsmB/NOP family.

The protein resides in the cytoplasm. The catalysed reaction is cytidine(967) in 16S rRNA + S-adenosyl-L-methionine = 5-methylcytidine(967) in 16S rRNA + S-adenosyl-L-homocysteine + H(+). In terms of biological role, specifically methylates the cytosine at position 967 (m5C967) of 16S rRNA. This is Ribosomal RNA small subunit methyltransferase B from Escherichia coli (strain SMS-3-5 / SECEC).